Here is a 46-residue protein sequence, read N- to C-terminus: DNA-directed RNA polymerase subunit Rpo12 (46 aa).

Residues Cys8, Cys23, and Cys26 each coordinate Zn(2+).

The protein belongs to the archaeal Rpo12/eukaryotic RPC10 RNA polymerase subunit family. In terms of assembly, part of the RNA polymerase complex. The cofactor is Zn(2+).

The protein localises to the cytoplasm. It catalyses the reaction RNA(n) + a ribonucleoside 5'-triphosphate = RNA(n+1) + diphosphate. DNA-dependent RNA polymerase (RNAP) catalyzes the transcription of DNA into RNA using the four ribonucleoside triphosphates as substrates. This chain is DNA-directed RNA polymerase subunit Rpo12, found in Archaeoglobus fulgidus (strain ATCC 49558 / DSM 4304 / JCM 9628 / NBRC 100126 / VC-16).